Consider the following 627-residue polypeptide: (R)-linalool synthase, chloroplastic (627 aa).

The N-terminal 21 residues, 1 to 21, are a transit peptide targeting the chloroplast; sequence MAFVSIAPLASRCCVHKSFVS. Asp378, Asp382, and Glu530 together coordinate Mg(2+). A DDXXD motif motif is present at residues 378–382; that stretch reads DDIYD.

Belongs to the terpene synthase family. Tpsd subfamily. The cofactor is Mg(2+). Mn(2+) is required as a cofactor.

It localises to the plastid. The protein resides in the chloroplast. The enzyme catalyses (2E)-geranyl diphosphate + H2O = (R)-linalool + diphosphate. It functions in the pathway terpene metabolism; oleoresin biosynthesis. Its function is as follows. Terpene synthase (TPS) involved in the biosynthesis of monoterpene natural products included in conifer oleoresin secretions and volatile emissions; these compounds contribute to biotic and abiotic stress defense against herbivores and pathogens. Catalyzes the conversion of (2E)-geranyl diphosphate (GPP) to (R)-linalool. The chain is (R)-linalool synthase, chloroplastic from Picea glauca (White spruce).